The chain runs to 218 residues: Glycerol-3-phosphate acyltransferase (218 aa).

Transmembrane regions (helical) follow at residues 10–30 (LTLGIAIVGGYLLGSIPFGLI), 60–80 (DLAAITLLGDAGKGVVAVLLA), 88–108 (PAIIALAGGSAFLGHLFPVWL), 125–145 (SAAWPVGVAAGATWLAMAFLF), and 165–185 (AFDQPYPFMGLCLFMAVLIFI).

It belongs to the PlsY family. Probably interacts with PlsX.

Its subcellular location is the cell inner membrane. The enzyme catalyses an acyl phosphate + sn-glycerol 3-phosphate = a 1-acyl-sn-glycero-3-phosphate + phosphate. Its pathway is lipid metabolism; phospholipid metabolism. Functionally, catalyzes the transfer of an acyl group from acyl-phosphate (acyl-PO(4)) to glycerol-3-phosphate (G3P) to form lysophosphatidic acid (LPA). This enzyme utilizes acyl-phosphate as fatty acyl donor, but not acyl-CoA or acyl-ACP. This Caulobacter vibrioides (strain ATCC 19089 / CIP 103742 / CB 15) (Caulobacter crescentus) protein is Glycerol-3-phosphate acyltransferase.